The chain runs to 916 residues: Isoleucine--tRNA ligase (916 aa).

A 'HIGH' region motif is present at residues 58–68 (PYANGHLHIGH). L-isoleucyl-5'-AMP is bound at residue Glu568. The 'KMSKS' region signature appears at 609-613 (KMSKS). Lys612 contacts ATP. Positions 891, 894, 906, and 909 each coordinate Zn(2+).

Belongs to the class-I aminoacyl-tRNA synthetase family. IleS type 1 subfamily. As to quaternary structure, monomer. Requires Zn(2+) as cofactor.

It localises to the cytoplasm. It carries out the reaction tRNA(Ile) + L-isoleucine + ATP = L-isoleucyl-tRNA(Ile) + AMP + diphosphate. Catalyzes the attachment of isoleucine to tRNA(Ile). As IleRS can inadvertently accommodate and process structurally similar amino acids such as valine, to avoid such errors it has two additional distinct tRNA(Ile)-dependent editing activities. One activity is designated as 'pretransfer' editing and involves the hydrolysis of activated Val-AMP. The other activity is designated 'posttransfer' editing and involves deacylation of mischarged Val-tRNA(Ile). This is Isoleucine--tRNA ligase from Campylobacter fetus subsp. fetus (strain 82-40).